A 160-amino-acid chain; its full sequence is Cytochrome b6-f complex subunit 4 (160 aa).

3 helical membrane passes run 36–56 (LLYI…GLAV), 95–115 (LLGV…PFLE), and 131–151 (TVFL…TLPI).

It belongs to the cytochrome b family. PetD subfamily. In terms of assembly, the 4 large subunits of the cytochrome b6-f complex are cytochrome b6, subunit IV (17 kDa polypeptide, petD), cytochrome f and the Rieske protein, while the 4 small subunits are petG, petL, petM and petN. The complex functions as a dimer.

It is found in the plastid. Its subcellular location is the chloroplast thylakoid membrane. In terms of biological role, component of the cytochrome b6-f complex, which mediates electron transfer between photosystem II (PSII) and photosystem I (PSI), cyclic electron flow around PSI, and state transitions. In Oryza nivara (Indian wild rice), this protein is Cytochrome b6-f complex subunit 4.